Here is a 214-residue protein sequence, read N- to C-terminus: Probable nicotinate-nucleotide adenylyltransferase (214 aa).

The protein belongs to the NadD family.

It catalyses the reaction nicotinate beta-D-ribonucleotide + ATP + H(+) = deamido-NAD(+) + diphosphate. Its pathway is cofactor biosynthesis; NAD(+) biosynthesis; deamido-NAD(+) from nicotinate D-ribonucleotide: step 1/1. Functionally, catalyzes the reversible adenylation of nicotinate mononucleotide (NaMN) to nicotinic acid adenine dinucleotide (NaAD). This chain is Probable nicotinate-nucleotide adenylyltransferase, found in Buchnera aphidicola subsp. Acyrthosiphon pisum (strain 5A).